We begin with the raw amino-acid sequence, 473 residues long: Lactate utilization protein B (473 aa).

4Fe-4S ferredoxin-type domains lie at 302-332 and 351-380; these read GSEFRQVLQCIRCAACINVCPVYRHVGGHSY and YDDYKELPYASSLCGACTEACPVKIPLHDL. Cys-311, Cys-314, Cys-317, Cys-321, Cys-364, Cys-367, and Cys-371 together coordinate [4Fe-4S] cluster.

This sequence belongs to the LutB/YkgF family.

Its function is as follows. Is involved in L-lactate degradation and allows cells to grow with lactate as the sole carbon source. Has probably a role as an electron transporter during oxidation of L-lactate. The sequence is that of Lactate utilization protein B from Bacillus cytotoxicus (strain DSM 22905 / CIP 110041 / 391-98 / NVH 391-98).